The chain runs to 577 residues: Probable ATP-dependent RNA helicase DDX55 homolog (577 aa).

Residues 7 to 37 (AVATKTYREKLGPEILEVFDKSYKSFTDVQV) carry the Q motif motif. The region spanning 40-218 (GTHLLNLSDV…VFGLRNAKQV (179 aa)) is the Helicase ATP-binding domain. 53–60 (SPTGSGKT) is an ATP binding site. Positions 166–169 (DEAD) match the DEAD box motif. Residues 231–393 (TLKNYFVECP…EVKVPTSTSR (163 aa)) form the Helicase C-terminal domain. The interval 508–577 (AKEKKRREKE…LSKKEIKDVL (70 aa)) is disordered. Residues 510–530 (EKKRREKEARKMKRAGGRFKS) are compositionally biased toward basic residues.

It belongs to the DEAD box helicase family. DDX55/SPB4 subfamily.

The enzyme catalyses ATP + H2O = ADP + phosphate + H(+). In terms of biological role, probable ATP-binding RNA helicase. The sequence is that of Probable ATP-dependent RNA helicase DDX55 homolog from Caenorhabditis briggsae.